Reading from the N-terminus, the 355-residue chain is D-alanine--D-alanine ligase (355 aa).

In terms of domain architecture, ATP-grasp spans 143–350 (KQIFSNLSIP…IDQLVAKLID (208 aa)). Residue 178 to 233 (IEKLNLPVFVKPANSGSSLGISKAKNKSEIIKALQKAWEIDSRIVIEEGLNVRELE) coordinates ATP. Residues aspartate 303, glutamate 317, and asparagine 319 each contribute to the Mg(2+) site.

It belongs to the D-alanine--D-alanine ligase family. It depends on Mg(2+) as a cofactor. Mn(2+) serves as cofactor.

It is found in the cytoplasm. It carries out the reaction 2 D-alanine + ATP = D-alanyl-D-alanine + ADP + phosphate + H(+). Its pathway is cell wall biogenesis; peptidoglycan biosynthesis. Its function is as follows. Cell wall formation. The protein is D-alanine--D-alanine ligase of Prochlorococcus marinus (strain MIT 9515).